The following is a 261-amino-acid chain: 3-methyl-2-oxobutanoate hydroxymethyltransferase (261 aa).

D42 and D81 together coordinate Mg(2+). Residues 42–43 (DS), D81, and K110 each bind 3-methyl-2-oxobutanoate. Residue E112 participates in Mg(2+) binding. E179 functions as the Proton acceptor in the catalytic mechanism.

This sequence belongs to the PanB family. Homodecamer; pentamer of dimers. Mg(2+) serves as cofactor.

The protein localises to the cytoplasm. It carries out the reaction 3-methyl-2-oxobutanoate + (6R)-5,10-methylene-5,6,7,8-tetrahydrofolate + H2O = 2-dehydropantoate + (6S)-5,6,7,8-tetrahydrofolate. It participates in cofactor biosynthesis; coenzyme A biosynthesis. Its function is as follows. Catalyzes the reversible reaction in which hydroxymethyl group from 5,10-methylenetetrahydrofolate is transferred onto alpha-ketoisovalerate to form ketopantoate. The sequence is that of 3-methyl-2-oxobutanoate hydroxymethyltransferase from Pyrobaculum neutrophilum (strain DSM 2338 / JCM 9278 / NBRC 100436 / V24Sta) (Thermoproteus neutrophilus).